The following is a 61-amino-acid chain: MLNIFSLISICLNSALYSSSFFFGKLPEAYAFLNPIVDVMPVIPVFFFLLAFVWQAAVSFR.

A propeptide spanning residues 1-24 is cleaved from the precursor; it reads MLNIFSLISICLNSALYSSSFFFG. A helical membrane pass occupies residues 40–60; that stretch reads MPVIPVFFFLLAFVWQAAVSF.

It belongs to the PsbK family. As to quaternary structure, PSII is composed of 1 copy each of membrane proteins PsbA, PsbB, PsbC, PsbD, PsbE, PsbF, PsbH, PsbI, PsbJ, PsbK, PsbL, PsbM, PsbT, PsbX, PsbY, PsbZ, Psb30/Ycf12, at least 3 peripheral proteins of the oxygen-evolving complex and a large number of cofactors. It forms dimeric complexes.

Its subcellular location is the plastid. The protein localises to the chloroplast thylakoid membrane. In terms of biological role, one of the components of the core complex of photosystem II (PSII). PSII is a light-driven water:plastoquinone oxidoreductase that uses light energy to abstract electrons from H(2)O, generating O(2) and a proton gradient subsequently used for ATP formation. It consists of a core antenna complex that captures photons, and an electron transfer chain that converts photonic excitation into a charge separation. In Jasminum nudiflorum (Winter jasmine), this protein is Photosystem II reaction center protein K.